Consider the following 133-residue polypeptide: Hexon-interlacing protein (133 aa).

A coiled-coil region spans residues 97 to 127 (REEDALSVVLTRMEELSQQLQDLFAKVALLN).

The protein belongs to the adenoviridae hexon-interlacing protein family. Homotrimer. Interacts with hexon protein; this interaction tethers the hexons together. Self-interacts with adjacent proteins. Interacts with kinesin light chain KLC1; this interaction leads to capsid disruption at the nuclear pore complex during virus entry into host cell.

The protein resides in the virion. The protein localises to the host nucleus. Its function is as follows. Structural component of the virion that acts as a cement protein on the capsid exterior and forms triskelion structures consisting of three molecules that stabilize three hexon trimers at the center of each icosahedral facet and fixes the peripentonal hexons. Dispensable for assembly. During virus entry, recruits the anterograde motor kinesin-1 to the capsid docked at the nuclear pore complex thereby subjecting the docked capsid to a pulling force. The resulting tension leads to capsid disruption, dispersion of capsid fragments toward cell periphery and eventually viral DNA entry into the host nucleus. The protein is Hexon-interlacing protein of Homo sapiens (Human).